A 314-amino-acid chain; its full sequence is MIEFEKPKIHKIDENDNYGRFVIEPLERGYGTTLGNSLRRILLSSLPGAAITSVQIDSVLHEFSTIEGVVEDVTQIILNLKKVSLKIESDEDKTLEINVAGPANVTAGDIMGDGDVVILNPELPICTVAEGTTFHAVLTADTGRGYTSADENKARKVDMPIGVLPIDSIYTPIERVNYQVENTRVGQRDDYDKLTLDIWTDGSITPSEATSLSAKILTEHLAIFVNLNDQAKETEIMVEKEETHKEKMLEMTIEELDLSVRSYNCLKRAGINSVQELTDRTDAQMMKVRNLGRKSLVEIQEKLSLLGLGFRSED.

The interval 1–228 (MIEFEKPKIH…EHLAIFVNLN (228 aa)) is alpha N-terminal domain (alpha-NTD). The alpha C-terminal domain (alpha-CTD) stretch occupies residues 245–314 (KEKMLEMTIE…LLGLGFRSED (70 aa)).

The protein belongs to the RNA polymerase alpha chain family. As to quaternary structure, homodimer. The RNAP catalytic core consists of 2 alpha, 1 beta, 1 beta' and 1 omega subunit. When a sigma factor is associated with the core the holoenzyme is formed, which can initiate transcription.

The enzyme catalyses RNA(n) + a ribonucleoside 5'-triphosphate = RNA(n+1) + diphosphate. Functionally, DNA-dependent RNA polymerase catalyzes the transcription of DNA into RNA using the four ribonucleoside triphosphates as substrates. In Pediococcus pentosaceus (strain ATCC 25745 / CCUG 21536 / LMG 10740 / 183-1w), this protein is DNA-directed RNA polymerase subunit alpha.